The primary structure comprises 244 residues: Tyrosine recombinase XerD-like (244 aa).

Residues 1–73 form the Core-binding (CB) domain; that stretch reads MRDRISAFLE…ACNQFLYFLY (73 aa). The Tyr recombinase domain maps to 90–244; it reads AEKKTEKPEI…KTVLTLEKYR (155 aa). Active-site residues include lysine 150 and arginine 211. Catalysis depends on tyrosine 243, which acts as the O-(3'-phospho-DNA)-tyrosine intermediate.

It belongs to the 'phage' integrase family. XerD-like subfamily.

The protein localises to the cytoplasm. Functionally, putative tyrosine recombinase. Not involved in the cutting and rejoining of the recombining DNA molecules on dif(SL) site. This is Tyrosine recombinase XerD-like from Streptococcus pneumoniae (strain CGSP14).